The primary structure comprises 698 residues: Polyribonucleotide nucleotidyltransferase (698 aa).

2 residues coordinate Mg(2+): Asp490 and Asp496. Positions 557-616 constitute a KH domain; sequence PKVVTMTIKPDKIRDVIGPGGKKINEIIDETGVKLDIEQDGTIFIGAVDQAMINRAREII. An S1 motif domain is found at 626–694; it reads GQTYQATVKR…KQGRVNASHR (69 aa).

Belongs to the polyribonucleotide nucleotidyltransferase family. It depends on Mg(2+) as a cofactor.

Its subcellular location is the cytoplasm. It carries out the reaction RNA(n+1) + phosphate = RNA(n) + a ribonucleoside 5'-diphosphate. Its function is as follows. Involved in mRNA degradation. Catalyzes the phosphorolysis of single-stranded polyribonucleotides processively in the 3'- to 5'-direction. This chain is Polyribonucleotide nucleotidyltransferase, found in Staphylococcus aureus (strain bovine RF122 / ET3-1).